Here is a 319-residue protein sequence, read N- to C-terminus: Beta-ketoacyl-[acyl-carrier-protein] synthase III (319 aa).

Active-site residues include Cys-115 and His-246. Residues 247-251 (QANLR) form an ACP-binding region. Residue Asn-276 is part of the active site.

This sequence belongs to the thiolase-like superfamily. FabH family. As to quaternary structure, homodimer.

It localises to the cytoplasm. The enzyme catalyses malonyl-[ACP] + acetyl-CoA + H(+) = 3-oxobutanoyl-[ACP] + CO2 + CoA. It functions in the pathway lipid metabolism; fatty acid biosynthesis. Its function is as follows. Catalyzes the condensation reaction of fatty acid synthesis by the addition to an acyl acceptor of two carbons from malonyl-ACP. Catalyzes the first condensation reaction which initiates fatty acid synthesis and may therefore play a role in governing the total rate of fatty acid production. Possesses both acetoacetyl-ACP synthase and acetyl transacylase activities. Its substrate specificity determines the biosynthesis of branched-chain and/or straight-chain of fatty acids. The polypeptide is Beta-ketoacyl-[acyl-carrier-protein] synthase III (Coxiella burnetii (strain Dugway 5J108-111)).